The following is a 1228-amino-acid chain: Reverse gyrase (1228 aa).

Residues 1–41 (MEVPLVAYLHSCPNCGGPITSDRLASGLPCRECLPDGAKAG) form an RG N-terminal-type zinc finger. Zn(2+) is bound by residues C12, C15, C30, and C33. Residues Q88 and 105–112 (APTGSGKT) each bind ATP. The region spanning 92–255 (ARRFVRGKSF…NLTKQLRKAE (164 aa)) is the Helicase ATP-binding domain. The short motif at 211–214 (DDVD) is the DEAD box element. The tract at residues 631 to 1228 (DLMRTILMVV…RKEVLPHLAS (598 aa)) is topoisomerase I. Residues 635-809 (TILMVVESPT…DIRRVEFHEV (175 aa)) form the Toprim domain. Mg(2+) contacts are provided by E641 and D778. Residues 825-1223 (NFSLVKAQIV…LYDEFRKEVL (399 aa)) enclose the Topo IA-type catalytic domain. Y967 acts as the O-(5'-phospho-DNA)-tyrosine intermediate in catalysis.

In the N-terminal section; belongs to the DEAD box helicase family. DDVD subfamily. This sequence in the C-terminal section; belongs to the type IA topoisomerase family. In terms of assembly, monomer. Requires Zn(2+) as cofactor. The cofactor is Mg(2+).

It is found in the cytoplasm. The catalysed reaction is ATP + H2O = ADP + phosphate + H(+). Modifies the topological state of DNA by introducing positive supercoils in an ATP-dependent process, increasing the linking number in steps of +1. Binds to single-stranded DNA, transiently cleaves and then rejoins the ends, introducing a positive supercoil in the process. The scissile phosphodiester is attacked by the catalytic tyrosine of the enzyme, resulting in the formation of a DNA-(5'-phosphotyrosyl)-enzyme intermediate. Probably involved in rewinding DNA strands in regions of the chromosome that have opened up to allow replication, transcription, DNA repair and/or for DNA protection. The protein is Reverse gyrase of Pyrobaculum aerophilum (strain ATCC 51768 / DSM 7523 / JCM 9630 / CIP 104966 / NBRC 100827 / IM2).